A 711-amino-acid chain; its full sequence is Toxin RTX-III translocation ATP-binding protein (711 aa).

In terms of domain architecture, Peptidase C39 spans 1–129 (MESQMPFNEK…EIFQGGMILI (129 aa)). The active site involves His87. The region spanning 158 to 440 (FVETIIVSIF…LAQLWQDFQQ (283 aa)) is the ABC transmembrane type-1 domain. 5 consecutive transmembrane segments (helical) span residues 162–182 (IIVS…FQVV), 195–215 (LNVI…LSGL), 273–293 (ALTS…MWYY), 299–319 (IVIL…SPIL), and 392–412 (VMII…LSIG). An ABC transporter domain is found at 472–707 (IAFKHIRFRY…ENGLYYYLNQ (236 aa)). An ATP-binding site is contributed by 506-513 (GRSGSGKS).

Belongs to the ABC transporter superfamily. Protein-1 exporter (TC 3.A.1.109) family. Homodimer.

The protein localises to the cell membrane. Its function is as follows. Involved in the transport of the toxin RTX-III. The protein is Toxin RTX-III translocation ATP-binding protein (apxIIIB) of Actinobacillus pleuropneumoniae (Haemophilus pleuropneumoniae).